Reading from the N-terminus, the 375-residue chain is Phytanoyl-CoA hydroxylase-interacting protein-like (375 aa).

Phosphoserine occurs at positions 11, 12, and 15. The N-linked (GlcNAc...) asparagine glycan is linked to N22. Position 24 is a phosphoserine (S24). N-linked (GlcNAc...) asparagine glycosylation is present at N36. One can recognise a Fibronectin type-III domain in the interval 51-160 (VPHNIKINNI…EIIEFCTADY (110 aa)).

The protein belongs to the PHYHIP family.

In terms of biological role, may play a role in the development of the central system. This Rattus norvegicus (Rat) protein is Phytanoyl-CoA hydroxylase-interacting protein-like (Phyhipl).